The chain runs to 910 residues: Eukaryotic translation initiation factor 3 subunit C (910 aa).

A disordered region spans residues 1–21 (MSRFFANGSESESESSEEEIQ). Positions 11–20 (SESESSEEEI) are enriched in acidic residues. 4 positions are modified to phosphoserine: Ser-34, Ser-165, Ser-176, and Ser-185. A disordered region spans residues 157–279 (FREAPDQESE…IRKRAEDDED (123 aa)). A compositionally biased stretch (acidic residues) spans 162–186 (DQESEAEDEVVALESDGGDAGDDSD). The span at 194–207 (AVPKAVKSAPAKAA) shows a compositional bias: low complexity. Residues 209 to 235 (ADDDDSDDSIDWDSDSESETESSDDEN) are compositionally biased toward acidic residues. A compositionally biased stretch (basic and acidic residues) spans 240-268 (MRERFLKRTTEKEEKDDDKRKDKRKEQKT). The region spanning 639-815 (FHMHINLELL…ETVGMHRSEP (177 aa)) is the PCI domain. The interval 847 to 910 (FFQRGNMGNR…QQQVQTIDEE (64 aa)) is disordered. Low complexity predominate over residues 862-874 (NRNQNNQGGNWLG). Over residues 882 to 891 (RNRNQRGHHK) the composition is skewed to basic residues. Residues 895–910 (DRQQQQQQQVQTIDEE) show a composition bias toward low complexity.

This sequence belongs to the eIF-3 subunit C family. In terms of assembly, component of the eukaryotic translation initiation factor 3 (eIF-3) complex. The eIF-3 complex interacts with pix.

The protein localises to the cytoplasm. Its function is as follows. Component of the eukaryotic translation initiation factor 3 (eIF-3) complex, which is involved in protein synthesis of a specialized repertoire of mRNAs and, together with other initiation factors, stimulates binding of mRNA and methionyl-tRNAi to the 40S ribosome. The eIF-3 complex specifically targets and initiates translation of a subset of mRNAs involved in cell proliferation. The protein is Eukaryotic translation initiation factor 3 subunit C of Drosophila melanogaster (Fruit fly).